Consider the following 406-residue polypeptide: Protein ALP1-like (406 aa).

The short motif at 8–15 is the Nuclear localization signal element; it reads KKKKRAEK. One can recognise a DDE Tnp4 domain in the interval 187–353; that stretch reads IDITHIVMNL…IIFVCCLLHN (167 aa). A divalent metal cation-binding residues include Asp188, Asp240, and Asp279.

Belongs to the HARBI1 family. It depends on a divalent metal cation as a cofactor.

The protein resides in the nucleus. In terms of biological role, transposase-derived protein that may have nuclease activity. This is Protein ALP1-like from Arabidopsis thaliana (Mouse-ear cress).